Reading from the N-terminus, the 163-residue chain is Nucleotide-binding protein Bcer98_0876 (163 aa).

Belongs to the YajQ family.

Functionally, nucleotide-binding protein. In Bacillus cytotoxicus (strain DSM 22905 / CIP 110041 / 391-98 / NVH 391-98), this protein is Nucleotide-binding protein Bcer98_0876.